The primary structure comprises 184 residues: ATP synthase subunit b, chloroplastic (184 aa).

A helical membrane pass occupies residues 27–49 (LATNPINLSVVLGVLIFFGKGVL).

This sequence belongs to the ATPase B chain family. In terms of assembly, F-type ATPases have 2 components, F(1) - the catalytic core - and F(0) - the membrane proton channel. F(1) has five subunits: alpha(3), beta(3), gamma(1), delta(1), epsilon(1). F(0) has four main subunits: a(1), b(1), b'(1) and c(10-14). The alpha and beta chains form an alternating ring which encloses part of the gamma chain. F(1) is attached to F(0) by a central stalk formed by the gamma and epsilon chains, while a peripheral stalk is formed by the delta, b and b' chains.

It localises to the plastid. The protein localises to the chloroplast thylakoid membrane. Its function is as follows. F(1)F(0) ATP synthase produces ATP from ADP in the presence of a proton or sodium gradient. F-type ATPases consist of two structural domains, F(1) containing the extramembraneous catalytic core and F(0) containing the membrane proton channel, linked together by a central stalk and a peripheral stalk. During catalysis, ATP synthesis in the catalytic domain of F(1) is coupled via a rotary mechanism of the central stalk subunits to proton translocation. Functionally, component of the F(0) channel, it forms part of the peripheral stalk, linking F(1) to F(0). The chain is ATP synthase subunit b, chloroplastic from Pelargonium hortorum (Common geranium).